The sequence spans 311 residues: Methionyl-tRNA formyltransferase (311 aa).

112-115 (SLLP) serves as a coordination point for (6S)-5,6,7,8-tetrahydrofolate.

This sequence belongs to the Fmt family.

It catalyses the reaction L-methionyl-tRNA(fMet) + (6R)-10-formyltetrahydrofolate = N-formyl-L-methionyl-tRNA(fMet) + (6S)-5,6,7,8-tetrahydrofolate + H(+). Its function is as follows. Attaches a formyl group to the free amino group of methionyl-tRNA(fMet). The formyl group appears to play a dual role in the initiator identity of N-formylmethionyl-tRNA by promoting its recognition by IF2 and preventing the misappropriation of this tRNA by the elongation apparatus. The polypeptide is Methionyl-tRNA formyltransferase (Sinorhizobium medicae (strain WSM419) (Ensifer medicae)).